A 256-amino-acid chain; its full sequence is Cytokine-inducible SH2-containing protein (256 aa).

Positions 81 to 162 constitute an SH2 domain; the sequence is WYWGSITASE…PDVVSLVQHY (82 aa). A disordered region spans residues 168–190; it reads ADTRSDSPDPAPTPALPVSKPDA. Positions 207-255 constitute an SOCS box domain; the sequence is KLVQPFVRRSSARSLQHLCRLVINRLVTDVDCLPLPRRMADYLRQYPFQ.

As to quaternary structure, stably associated with the tyrosine-phosphorylated IL3 receptor beta chain and tyrosine-phosphorylated EPO receptor (EPOR).

It functions in the pathway protein modification; protein ubiquitination. SOCS family proteins form part of a classical negative feedback system that regulates cytokine signal transduction. CIS is involved in the negative regulation of cytokines that signal through the JAK-STAT5 pathway such as erythropoietin, prolactin and interleukin 3 (IL3) receptor. Inhibits STAT5 trans-activation by suppressing its tyrosine phosphorylation. May be a substrate recognition component of a SCF-like ECS (Elongin BC-CUL2/5-SOCS-box protein) E3 ubiquitin-protein ligase complex which mediates the ubiquitination and subsequent proteasomal degradation of target proteins. The protein is Cytokine-inducible SH2-containing protein (Cish) of Rattus norvegicus (Rat).